Here is a 207-residue protein sequence, read N- to C-terminus: Large ribosomal subunit protein uL4 (207 aa).

The disordered stretch occupies residues 49-78 (HAVKNRSAVSGGGRKPWRQKGTGRARQGSI).

Belongs to the universal ribosomal protein uL4 family. Part of the 50S ribosomal subunit.

In terms of biological role, one of the primary rRNA binding proteins, this protein initially binds near the 5'-end of the 23S rRNA. It is important during the early stages of 50S assembly. It makes multiple contacts with different domains of the 23S rRNA in the assembled 50S subunit and ribosome. Its function is as follows. Forms part of the polypeptide exit tunnel. This Streptococcus pyogenes serotype M49 (strain NZ131) protein is Large ribosomal subunit protein uL4.